The chain runs to 189 residues: Putative 3-methyladenine DNA glycosylase (189 aa).

It belongs to the DNA glycosylase MPG family.

This Corynebacterium glutamicum (strain ATCC 13032 / DSM 20300 / JCM 1318 / BCRC 11384 / CCUG 27702 / LMG 3730 / NBRC 12168 / NCIMB 10025 / NRRL B-2784 / 534) protein is Putative 3-methyladenine DNA glycosylase (mag).